A 539-amino-acid polypeptide reads, in one-letter code: Acid-sensing ion channel 4 (539 aa).

Residues 1-68 (MPIEIVCKIK…GPGPHGLRRT (68 aa)) lie on the Cytoplasmic side of the membrane. The chain crosses the membrane as a helical span at residues 69–89 (LWVLALLTSLAAFLYQAASLA). The Extracellular portion of the chain corresponds to 90–438 (RGYLTRPHLV…EQRAAYGLSA (349 aa)). Intrachain disulfides connect Cys-118/Cys-202 and Cys-180/Cys-187. 4 N-linked (GlcNAc...) asparagine glycosylation sites follow: Asn-191, Asn-243, Asn-341, and Asn-376. Disulfide bonds link Cys-296–Cys-375, Cys-318–Cys-371, Cys-322–Cys-369, Cys-331–Cys-353, and Cys-333–Cys-345. The helical transmembrane segment at 439-459 (LLGDLGGQMGLFIGASILTLL) threads the bilayer. Positions 452–454 (GAS) match the GAS motif; ion selectivity filter motif. The Cytoplasmic segment spans residues 460–539 (EILDYIYEVS…PGSLFEDFAC (80 aa)). Residues 501-531 (EQSPCPNRGRAEGGGASNLLPNHHHPHGPPG) are disordered.

The protein belongs to the amiloride-sensitive sodium channel (TC 1.A.6) family. ASIC4 subfamily. As to quaternary structure, homotrimer. Heterotrimer; with other ASIC proteins producing functional channels. Expressed in brain, spinal cord and dorsal root ganglion (DRG). Expressed by a subset of sensory neurons in the DRG. Expressed by granule cells in the cerebellar cortex. In hippocampus, expression is detected in dentate gyrus granule cells, in pyramidal cells of CA1-CA3 subfields and in interneurons of the striatum oriens and radiatum of all subfields. In cerebral cortex expressed in small, medium and large pyramidal cells in layers 2, 3 and 5 respectively. Also expressed in striatum, globus pallidus, inferior and superior calliculi, amygdala, magnocellular preoptic nucleus, islands of Calleja and large neurons of olfactory tubercules.

The protein resides in the cell membrane. Functionally, does not exhibit measurable stand-alone pH-gated sodium channel activity but may form pH-gated heterotrimeric sodium channels. Its activity could also depend on alternative gating mechanisms. This Rattus norvegicus (Rat) protein is Acid-sensing ion channel 4.